Consider the following 423-residue polypeptide: Histidine--tRNA ligase (423 aa).

It belongs to the class-II aminoacyl-tRNA synthetase family. In terms of assembly, homodimer.

It localises to the cytoplasm. It catalyses the reaction tRNA(His) + L-histidine + ATP = L-histidyl-tRNA(His) + AMP + diphosphate + H(+). The sequence is that of Histidine--tRNA ligase (hisS) from Haemophilus influenzae (strain ATCC 51907 / DSM 11121 / KW20 / Rd).